The sequence spans 2201 residues: Tenascin (2201 aa).

An N-terminal signal peptide occupies residues 1–22 (MGAMTQLLAGVFLAFLALATEG). Asn38 carries N-linked (GlcNAc...) asparagine glycosylation. Phosphoserine occurs at positions 65 and 70. Ser72 carries the post-translational modification Phosphoserine; by FAM20C. The O-linked (Xyl...) (chondroitin sulfate) serine glycan is linked to Ser72. Residues 118-145 (DVKELLSRLEELENLVSSLREQCTAGAG) adopt a coiled-coil conformation. N-linked (GlcNAc...) asparagine glycosylation is found at Asn166 and Asn184. One can recognise an EGF-like 1; incomplete domain in the interval 174 to 186 (CVCEPGWKGPNCS). EGF-like domains are found at residues 186–217 (SEPE…EDCS), 217–248 (SQLA…ADCS), 248–280 (SREI…DDCN), 280–311 (NKPL…EDCS), 311–342 (SELI…EDCG), 342–373 (GKPT…VDCS), 373–404 (SEKR…ADCG), 404–435 (GELK…EDCS), 435–466 (SQLR…YDCS), 466–497 (SDMS…EDCR), 497–528 (RDRQ…PDCA), 528–559 (AELS…KDCK), 559–590 (KEQR…LDCG), and 590–621 (GQHS…EDCS). 42 disulfides stabilise this stretch: Cys190–Cys200, Cys194–Cys205, Cys207–Cys216, Cys221–Cys231, Cys225–Cys236, Cys238–Cys247, Cys252–Cys263, Cys256–Cys268, Cys270–Cys279, Cys284–Cys294, Cys288–Cys299, Cys301–Cys310, Cys315–Cys325, Cys319–Cys330, Cys332–Cys341, Cys346–Cys356, Cys350–Cys361, Cys363–Cys372, Cys377–Cys387, Cys381–Cys392, Cys394–Cys403, Cys408–Cys418, Cys412–Cys423, Cys425–Cys434, Cys439–Cys449, Cys443–Cys454, Cys456–Cys465, Cys470–Cys480, Cys474–Cys485, Cys487–Cys496, Cys501–Cys511, Cys505–Cys516, Cys518–Cys527, Cys532–Cys542, Cys536–Cys547, Cys549–Cys558, Cys563–Cys573, Cys567–Cys578, Cys580–Cys589, Cys594–Cys604, Cys598–Cys609, and Cys611–Cys620. N-linked (GlcNAc...) asparagine glycosylation is present at Asn327. 15 consecutive Fibronectin type-III domains span residues 625-715 (PPKD…LPAP), 716-804 (EGLK…TRLD), 805-894 (APSQ…TGLD), 895-990 (APRN…TPKD), 991-1075 (LQVS…EQAP), 1076-1165 (ELEN…TGET), 1167-1256 (NLGE…TEEV), 1258-1350 (DMGN…LPQL), 1351-1439 (GDLA…AKEP), 1440-1531 (EIGN…ALPL), 1533-1621 (ENLT…EAEP), 1622-1711 (EVDN…TAMG), 1712-1801 (SPKE…ALDG), 1802-1888 (PSGL…TDLD), and 1889-1977 (SPRD…IGLL). An N-linked (GlcNAc...) asparagine glycan is attached at Asn788. At Thr905 the chain carries Phosphothreonine. Asn1018, Asn1034, Asn1079, Asn1093, Asn1119, Asn1184, Asn1210, Asn1261, Asn1275, Asn1301, Asn1366, Asn1392, Asn1445, Asn1455, Asn1485, and Asn1534 each carry an N-linked (GlcNAc...) asparagine glycan. N-linked (GlcNAc...) asparagine glycosylation occurs at Asn1809. Residues 1975 to 2190 (GLLYPFPKDC…FAEMKLRPSN (216 aa)) enclose the Fibrinogen C-terminal domain. A glycan (N-linked (GlcNAc...) asparagine) is linked at Asn2162.

Belongs to the tenascin family. As to quaternary structure, homohexamer; disulfide-linked. A homotrimer may be formed in the triple coiled-coil region and may be stabilized by disulfide rings at both ends. Two of such half-hexabrachions may be disulfide linked within the central globule. Interacts with CSPG4. Interacts (via the 3rd fibronectin type-III domain) with integrin ITGA9:ITGB1. In terms of tissue distribution, detected in fibroblasts (at protein level).

Its subcellular location is the secreted. It is found in the extracellular space. The protein resides in the extracellular matrix. Functionally, extracellular matrix protein implicated in guidance of migrating neurons as well as axons during development, synaptic plasticity as well as neuronal regeneration. Promotes neurite outgrowth from cortical neurons grown on a monolayer of astrocytes. Ligand for integrins alpha-8/beta-1, alpha-9/beta-1, alpha-V/beta-3 and alpha-V/beta-6. In tumors, stimulates angiogenesis by elongation, migration and sprouting of endothelial cells. This chain is Tenascin (TNC), found in Homo sapiens (Human).